The following is a 328-amino-acid chain: MQTAVNEFLTPRHIDVSEITPTRARVVLEPLERGFGHTLGNALRRILLSSMAGCAIVEAEIDGVLHEYSAIEGVREDVIEILLNLKGVAVVMHGKDSTVLTLSKKGPGVVTAGDIQVDHDVEIKNPDHVIANITGNTELKMRLTIARGRGYQPADSRRRDDDESRAIGRLQLDASFSPVKRLAYSVESARVEQRTDLDKLVLDLETNGTIDPEEAIRRAATILQQQLAVFVDLEGEKQSAPEQKEEAIDPILLRPVDDLELTVRSANCLKAENIYYIGDLIQRTEVELLKTPNLGKKSLTEIKDVLASRGLSLGMRLENWPPASLKND.

Residues 1-234 (MQTAVNEFLT…QQLAVFVDLE (234 aa)) are alpha N-terminal domain (alpha-NTD). The tract at residues 248–328 (IDPILLRPVD…NWPPASLKND (81 aa)) is alpha C-terminal domain (alpha-CTD).

It belongs to the RNA polymerase alpha chain family. In terms of assembly, homodimer. The RNAP catalytic core consists of 2 alpha, 1 beta, 1 beta' and 1 omega subunit. When a sigma factor is associated with the core the holoenzyme is formed, which can initiate transcription.

It carries out the reaction RNA(n) + a ribonucleoside 5'-triphosphate = RNA(n+1) + diphosphate. DNA-dependent RNA polymerase catalyzes the transcription of DNA into RNA using the four ribonucleoside triphosphates as substrates. In Cellvibrio japonicus (strain Ueda107) (Pseudomonas fluorescens subsp. cellulosa), this protein is DNA-directed RNA polymerase subunit alpha.